A 203-amino-acid polypeptide reads, in one-letter code: MKSTQQLGQEAREFEFNPNIPLHLYLKTCVTLLNNASECFQRGDKSLSYFYYFRYVDLCTNKLPNHPTIRSTSTGLDNDSKLYVQEYKQLLRLEVPHILKIMEELKTELDAMYERHKVSLANNIASPISYKHNNRMDALLHDYYTERGCTGHSMQHKTSLHKNENFNERINLMKDSFMGRAPNGSQEVRNVSNTFYPDLPTLS.

This sequence belongs to the RFU1 family.

It is found in the endosome. Its function is as follows. Inhibitor of the DOA4 deubiquitinase involved in the regulation of protein degradation by the proteasome and maintenance of a normal level of free ubiquitin. This chain is Regulator of free ubiquitin chains 1 (RFU1), found in Candida glabrata (strain ATCC 2001 / BCRC 20586 / JCM 3761 / NBRC 0622 / NRRL Y-65 / CBS 138) (Yeast).